A 100-amino-acid polypeptide reads, in one-letter code: Co-chaperonin GroES (100 aa).

It belongs to the GroES chaperonin family. Heptamer of 7 subunits arranged in a ring. Interacts with the chaperonin GroEL.

Its subcellular location is the cytoplasm. Together with the chaperonin GroEL, plays an essential role in assisting protein folding. The GroEL-GroES system forms a nano-cage that allows encapsulation of the non-native substrate proteins and provides a physical environment optimized to promote and accelerate protein folding. GroES binds to the apical surface of the GroEL ring, thereby capping the opening of the GroEL channel. The sequence is that of Co-chaperonin GroES from Mycolicibacterium vanbaalenii (strain DSM 7251 / JCM 13017 / BCRC 16820 / KCTC 9966 / NRRL B-24157 / PYR-1) (Mycobacterium vanbaalenii).